A 288-amino-acid polypeptide reads, in one-letter code: Heme oxygenase 1 (288 aa).

Residues methionine 1–alanine 265 lie on the Cytoplasmic side of the membrane. Heme b is bound by residues lysine 18, histidine 25, tyrosine 134, and arginine 183. Residues histidine 223–asparagine 260 are disordered. Position 229 is a phosphoserine (serine 229). A helical; Anchor for type IV membrane protein transmembrane segment spans residues proline 266–methionine 288.

This sequence belongs to the heme oxygenase family. As to quaternary structure, homodimer and higher order homooligomer. Oligomerization is crucial for its stability and function in the endoplasmic reticulum. Interacts with FLVCR2; this interaction is potentiated in the presence of heme. A soluble form arises by proteolytic removal of the membrane anchor.

It is found in the endoplasmic reticulum membrane. It carries out the reaction heme b + 3 reduced [NADPH--hemoprotein reductase] + 3 O2 = biliverdin IXalpha + CO + Fe(2+) + 3 oxidized [NADPH--hemoprotein reductase] + 3 H2O + H(+). Functionally, catalyzes the oxidative cleavage of heme at the alpha-methene bridge carbon, released as carbon monoxide (CO), to generate biliverdin IXalpha, while releasing the central heme iron chelate as ferrous iron. Affords protection against programmed cell death and this cytoprotective effect relies on its ability to catabolize free heme and prevent it from sensitizing cells to undergo apoptosis. In terms of biological role, catalyzes the oxidative cleavage of heme at the alpha-methene bridge carbon, released as carbon monoxide (CO), to generate biliverdin IXalpha, while releasing the central heme iron chelate as ferrous iron. The protein is Heme oxygenase 1 (HMOX1) of Pongo abelii (Sumatran orangutan).